Consider the following 613-residue polypeptide: Coiled-coil domain-containing protein 116 (613 aa).

The interval 41-68 (KPGRVPHPPSTCGSSALQGQRRNKRHPQ) is disordered. Polar residues predominate over residues 51 to 60 (TCGSSALQGQ). Residues 79 to 104 (ESQVLDSLETVVEKATERMAAMKTEA) are a coiled coil. Disordered stretches follow at residues 329 to 395 (CRDG…AQVA), 509 to 541 (RQAS…QATE), and 565 to 613 (MSAC…EDGV). Residue serine 386 is modified to Phosphoserine. Over residues 512-539 (SRLSTSHCSTETPSVQQEPATHTAQDQA) the composition is skewed to polar residues. A compositionally biased stretch (basic and acidic residues) spans 577–589 (KSKDMDNEGRDKA). Residues 590–613 (EIEDEDEDEFKDEDQDEDKDEDGV) are compositionally biased toward acidic residues.

Its subcellular location is the cytoplasm. The protein resides in the cytoskeleton. The protein localises to the microtubule organizing center. It localises to the centrosome. In Homo sapiens (Human), this protein is Coiled-coil domain-containing protein 116 (CCDC116).